A 213-amino-acid polypeptide reads, in one-letter code: Uracil phosphoribosyltransferase (213 aa).

Residues Arg78, Arg103, and 130–138 contribute to the 5-phospho-alpha-D-ribose 1-diphosphate site; that span reads DPMLATGGT. Uracil is bound by residues Ile197 and 202 to 204; that span reads GDA. Asp203 lines the 5-phospho-alpha-D-ribose 1-diphosphate pocket.

Belongs to the UPRTase family. It depends on Mg(2+) as a cofactor.

It catalyses the reaction UMP + diphosphate = 5-phospho-alpha-D-ribose 1-diphosphate + uracil. It participates in pyrimidine metabolism; UMP biosynthesis via salvage pathway; UMP from uracil: step 1/1. Allosterically activated by GTP. Its function is as follows. Catalyzes the conversion of uracil and 5-phospho-alpha-D-ribose 1-diphosphate (PRPP) to UMP and diphosphate. The chain is Uracil phosphoribosyltransferase from Nocardioides sp. (strain ATCC BAA-499 / JS614).